Reading from the N-terminus, the 195-residue chain is Peptidyl-tRNA hydrolase (195 aa).

Tyr-17 contacts tRNA. The active-site Proton acceptor is His-22. TRNA-binding residues include Tyr-68, Asn-70, and Asn-116.

Belongs to the PTH family. In terms of assembly, monomer.

Its subcellular location is the cytoplasm. The catalysed reaction is an N-acyl-L-alpha-aminoacyl-tRNA + H2O = an N-acyl-L-amino acid + a tRNA + H(+). In terms of biological role, hydrolyzes ribosome-free peptidyl-tRNAs (with 1 or more amino acids incorporated), which drop off the ribosome during protein synthesis, or as a result of ribosome stalling. Its function is as follows. Catalyzes the release of premature peptidyl moieties from peptidyl-tRNA molecules trapped in stalled 50S ribosomal subunits, and thus maintains levels of free tRNAs and 50S ribosomes. The sequence is that of Peptidyl-tRNA hydrolase from Shewanella oneidensis (strain ATCC 700550 / JCM 31522 / CIP 106686 / LMG 19005 / NCIMB 14063 / MR-1).